A 198-amino-acid polypeptide reads, in one-letter code: Probable molybdenum cofactor guanylyltransferase (198 aa).

Residues 9–11 (LAG), K22, D66, and D95 each bind GTP. D95 is a Mg(2+) binding site.

Belongs to the MobA family. The cofactor is Mg(2+).

Its subcellular location is the cytoplasm. The enzyme catalyses Mo-molybdopterin + GTP + H(+) = Mo-molybdopterin guanine dinucleotide + diphosphate. Functionally, transfers a GMP moiety from GTP to Mo-molybdopterin (Mo-MPT) cofactor (Moco or molybdenum cofactor) to form Mo-molybdopterin guanine dinucleotide (Mo-MGD) cofactor. This chain is Probable molybdenum cofactor guanylyltransferase, found in Clostridium perfringens (strain SM101 / Type A).